The sequence spans 660 residues: Pseudouridylate synthase 7 homolog (660 aa).

The tract at residues 1–99 is disordered; sequence MEMTSTSLKR…EAGEEEEAES (99 aa). Position 7 is a phosphoserine (S7). A compositionally biased stretch (basic and acidic residues) spans 22–32; that stretch reads TPHDETKKQKV. The span at 76 to 99 shows a compositional bias: acidic residues; the sequence is QEEEEEEEEEDGLSEAGEEEEAES. Position 126 is a phosphoserine (S126). The active-site Nucleophile is the D293. One can recognise a TRUD domain in the interval 369-579; the sequence is GFINYYGMQR…SGAYRRIIIR (211 aa).

This sequence belongs to the pseudouridine synthase TruD family. Interacts with SIRT1.

The protein resides in the nucleus. It carries out the reaction a uridine in tRNA = a pseudouridine in tRNA. The catalysed reaction is uridine(13) in tRNA = pseudouridine(13) in tRNA. The enzyme catalyses a uridine in mRNA = a pseudouridine in mRNA. In terms of biological role, pseudouridylate synthase that catalyzes pseudouridylation of RNAs. Acts as a regulator of protein synthesis in embryonic stem cells by mediating pseudouridylation of RNA fragments derived from tRNAs (tRFs): pseudouridylated tRFs inhibit translation by targeting the translation initiation complex. Also catalyzes pseudouridylation of mRNAs: mediates pseudouridylation of mRNAs with the consensus sequence 5'-UGUAG-3'. Acts as a regulator of pre-mRNA splicing by mediating pseudouridylation of pre-mRNAs at locations associated with alternatively spliced regions. Pseudouridylation of pre-mRNAs near splice sites directly regulates mRNA splicing and mRNA 3'-end processing. In addition to mRNAs and tRNAs, binds other types of RNAs, such as snRNAs, Y RNAs and vault RNAs, suggesting that it can catalyze pseudouridylation of many RNA types. The chain is Pseudouridylate synthase 7 homolog from Mus musculus (Mouse).